Reading from the N-terminus, the 105-residue chain is Heat shock protein HspQ (105 aa).

A disordered region spans residues 76–105 (EMRDEHPEQPSMDELARTIRKQLQAPRLRN).

The protein belongs to the HspQ family.

The protein resides in the cytoplasm. Its function is as follows. Involved in the degradation of certain denaturated proteins, including DnaA, during heat shock stress. The chain is Heat shock protein HspQ from Salmonella agona (strain SL483).